Reading from the N-terminus, the 376-residue chain is Phosphoserine aminotransferase (376 aa).

Arg46 provides a ligand contact to L-glutamate. Pyridoxal 5'-phosphate-binding positions include 80–81 (AT), Phe104, Thr150, Asp172, and Gln195. Lys196 is modified (N6-(pyridoxal phosphate)lysine). A pyridoxal 5'-phosphate-binding site is contributed by 247-248 (NT).

It belongs to the class-V pyridoxal-phosphate-dependent aminotransferase family. SerC subfamily. As to quaternary structure, homodimer. Pyridoxal 5'-phosphate serves as cofactor.

Its subcellular location is the cytoplasm. The enzyme catalyses O-phospho-L-serine + 2-oxoglutarate = 3-phosphooxypyruvate + L-glutamate. The catalysed reaction is 4-(phosphooxy)-L-threonine + 2-oxoglutarate = (R)-3-hydroxy-2-oxo-4-phosphooxybutanoate + L-glutamate. Its pathway is amino-acid biosynthesis; L-serine biosynthesis; L-serine from 3-phospho-D-glycerate: step 2/3. The protein operates within cofactor biosynthesis; pyridoxine 5'-phosphate biosynthesis; pyridoxine 5'-phosphate from D-erythrose 4-phosphate: step 3/5. Functionally, catalyzes the reversible conversion of 3-phosphohydroxypyruvate to phosphoserine and of 3-hydroxy-2-oxo-4-phosphonooxybutanoate to phosphohydroxythreonine. The chain is Phosphoserine aminotransferase from Corynebacterium glutamicum (strain R).